The following is a 375-amino-acid chain: Dual-specificity RNA methyltransferase RlmN (375 aa).

Glu-98 serves as the catalytic Proton acceptor. The region spanning 106-346 (GGKRRTLCVS…VRTTRGDDID (241 aa)) is the Radical SAM core domain. Cys-113 and Cys-349 are disulfide-bonded. Residues Cys-120, Cys-124, and Cys-127 each contribute to the [4Fe-4S] cluster site. S-adenosyl-L-methionine contacts are provided by residues 174–175 (GE), Ser-206, 228–230 (SLH), and Asn-306. Cys-349 acts as the S-methylcysteine intermediate in catalysis.

Belongs to the radical SAM superfamily. RlmN family. The cofactor is [4Fe-4S] cluster.

The protein resides in the cytoplasm. The catalysed reaction is adenosine(2503) in 23S rRNA + 2 reduced [2Fe-2S]-[ferredoxin] + 2 S-adenosyl-L-methionine = 2-methyladenosine(2503) in 23S rRNA + 5'-deoxyadenosine + L-methionine + 2 oxidized [2Fe-2S]-[ferredoxin] + S-adenosyl-L-homocysteine. It carries out the reaction adenosine(37) in tRNA + 2 reduced [2Fe-2S]-[ferredoxin] + 2 S-adenosyl-L-methionine = 2-methyladenosine(37) in tRNA + 5'-deoxyadenosine + L-methionine + 2 oxidized [2Fe-2S]-[ferredoxin] + S-adenosyl-L-homocysteine. Its function is as follows. Specifically methylates position 2 of adenine 2503 in 23S rRNA and position 2 of adenine 37 in tRNAs. m2A2503 modification seems to play a crucial role in the proofreading step occurring at the peptidyl transferase center and thus would serve to optimize ribosomal fidelity. The sequence is that of Dual-specificity RNA methyltransferase RlmN from Chromohalobacter salexigens (strain ATCC BAA-138 / DSM 3043 / CIP 106854 / NCIMB 13768 / 1H11).